A 136-amino-acid chain; its full sequence is Globin CTP-III (136 aa).

The Globin domain maps to 1-136; the sequence is LSADQISTVQ…TFFGMIFSKM (136 aa). His87 lines the heme b pocket.

Belongs to the globin family. Monomer.

The polypeptide is Globin CTP-III (Chironomus thummi piger (Midge)).